The chain runs to 208 residues: Uracil phosphoribosyltransferase (208 aa).

5-phospho-alpha-D-ribose 1-diphosphate is bound by residues R78, R103, and 130-138 (DPMLATANS). Uracil contacts are provided by residues I193 and 198–200 (GDA). D199 contributes to the 5-phospho-alpha-D-ribose 1-diphosphate binding site.

Belongs to the UPRTase family. The cofactor is Mg(2+).

The enzyme catalyses UMP + diphosphate = 5-phospho-alpha-D-ribose 1-diphosphate + uracil. It functions in the pathway pyrimidine metabolism; UMP biosynthesis via salvage pathway; UMP from uracil: step 1/1. Its activity is regulated as follows. Allosterically activated by GTP. Catalyzes the conversion of uracil and 5-phospho-alpha-D-ribose 1-diphosphate (PRPP) to UMP and diphosphate. The chain is Uracil phosphoribosyltransferase from Brucella ovis (strain ATCC 25840 / 63/290 / NCTC 10512).